Reading from the N-terminus, the 384-residue chain is Tryptophan--tRNA ligase (384 aa).

The 'HIGH' region motif lies at 81–89; it reads PSGPMHIGH. A 'KMSKS' region motif is present at residues 252 to 256; the sequence is KMSAS.

Belongs to the class-I aminoacyl-tRNA synthetase family.

It localises to the cytoplasm. The catalysed reaction is tRNA(Trp) + L-tryptophan + ATP = L-tryptophyl-tRNA(Trp) + AMP + diphosphate + H(+). The protein is Tryptophan--tRNA ligase of Thermococcus sibiricus (strain DSM 12597 / MM 739).